Reading from the N-terminus, the 1034-residue chain is Protein ITPRID1 (1034 aa).

3 disordered regions span residues 223-290 (KTQQ…PTKP), 442-486 (QVSS…KSMT), and 624-678 (QSSL…SSWS). 2 stretches are compositionally biased toward polar residues: residues 443-453 (VSSMTGSQSPT) and 465-476 (HSPASQQDSLQE). A compositionally biased stretch (low complexity) spans 477 to 486 (SYGSKSKSMT). Residues 669–678 (TDSNAASSWS) are compositionally biased toward polar residues. Positions 843 to 902 (EMETMKMVCQSFREHLEEIEQHFMGQQALYPRDMSEEEREEAEYLRTLREALRQQVAELA) form a coiled coil.

In Mus musculus (Mouse), this protein is Protein ITPRID1 (Itprid1).